The sequence spans 1031 residues: Telomerase reverse transcriptase (1031 aa).

The Reverse transcriptase domain occupies 498-852; that stretch reads KEVEEWKKSL…DYCDWIGISI (355 aa). Positions 603, 781, and 782 each coordinate Mg(2+).

It belongs to the reverse transcriptase family. Telomerase subfamily. In terms of assembly, component of the telomerase holoenzyme complex composed minimally of the catalytic subunit p123 and the telomerase RNA template component.

The protein localises to the nucleus. It localises to the chromosome. The protein resides in the telomere. It carries out the reaction DNA(n) + a 2'-deoxyribonucleoside 5'-triphosphate = DNA(n+1) + diphosphate. In terms of biological role, telomerase is a ribonucleoprotein enzyme essential for the replication of chromosome termini in most eukaryotes. It elongates telomeres. It is a reverse transcriptase that adds simple sequence repeats to chromosome ends by copying a template sequence within the RNA component of the enzyme. The chain is Telomerase reverse transcriptase from Euplotes aediculatus (Ciliate).